We begin with the raw amino-acid sequence, 551 residues long: MTSHRLPEITLTPELTAAAAEAKAWPFEEARKILKRYAKTGLPETVIFETGYGPSGLPHIGTFGEVARTSMVRHAFRILTQDKVKTRLICFSDDLDGMRKVPDNVPDRAALEPYLQMPLSSVPNPFGGDYKSFAEHNNAMLCRFLDTFGFDYEFASATEYYRSGRFDTVLLKAVERYDDIMKVMLPTLGEERQATYSPFLPISPKSGRVLYVPMKKVDAKAGTITFDDEDGEETTLSVTGGKVKLQWKPDFGMRWAALGVDFEMFGKDHQTNAGIYDRICEILGGRAPEHFVYELFLDQLGQKISKSKGNGISIDEWLAYAPTESLTLYNFQKPKTAKKLYFDVIPKTVDEYFTYLSAYARQEWKDRLNNPVWHIHYGNPPKADLPVTFALMLNLVSASNAESPAVLWGFISRHVPGVTPENNPELDALVGYAIRYFNDFVKPTKKFRAPDDVERAALEALDAKLGELPAGTDGNVIQNAILDVARAIERYQDHTKKSPEGGPGVSVSFFQMLYEVLIGQERGPRFGSFVALYGIDETRALIKKALAGELA.

Positions 54-62 (PSGLPHIGT) match the 'HIGH' region motif. The 'KMSKS' region signature appears at 303-307 (KISKS). Lys306 provides a ligand contact to ATP.

This sequence belongs to the class-I aminoacyl-tRNA synthetase family.

The protein resides in the cytoplasm. It catalyses the reaction tRNA(Lys) + L-lysine + ATP = L-lysyl-tRNA(Lys) + AMP + diphosphate. This is Lysine--tRNA ligase from Brucella melitensis biotype 1 (strain ATCC 23456 / CCUG 17765 / NCTC 10094 / 16M).